Reading from the N-terminus, the 441-residue chain is Homogentisate 1,2-dioxygenase (441 aa).

Histidine 287 serves as the catalytic Proton acceptor. Positions 330 and 336 each coordinate Fe cation. Residues tyrosine 345 and histidine 366 each coordinate homogentisate. Fe cation is bound at residue histidine 366.

Belongs to the homogentisate dioxygenase family. Hexamer; dimer of trimers. Requires Fe cation as cofactor.

It catalyses the reaction homogentisate + O2 = 4-maleylacetoacetate + H(+). Its pathway is amino-acid degradation; L-phenylalanine degradation; acetoacetate and fumarate from L-phenylalanine: step 4/6. Its function is as follows. Involved in the catabolism of homogentisate (2,5-dihydroxyphenylacetate or 2,5-OH-PhAc), a central intermediate in the degradation of phenylalanine and tyrosine. Catalyzes the oxidative ring cleavage of the aromatic ring of homogentisate to yield maleylacetoacetate. In Xanthomonas oryzae pv. oryzae (strain KACC10331 / KXO85), this protein is Homogentisate 1,2-dioxygenase.